Reading from the N-terminus, the 265-residue chain is Orotidine 5'-phosphate decarboxylase (265 aa).

Residues aspartate 37, 59–61 (KTH), 91–100 (DRKFADIGNT), tyrosine 217, and arginine 236 each bind substrate. Lysine 93 serves as the catalytic Proton donor.

The protein belongs to the OMP decarboxylase family.

It carries out the reaction orotidine 5'-phosphate + H(+) = UMP + CO2. It participates in pyrimidine metabolism; UMP biosynthesis via de novo pathway; UMP from orotate: step 2/2. The chain is Orotidine 5'-phosphate decarboxylase (URA3) from Saccharomycopsis fibuligera (Yeast).